The following is a 575-amino-acid chain: 2-isopropylmalate synthase (575 aa).

Residues 40-314 (PRWCAVDLRD…DPQIDFSDID (275 aa)) enclose the Pyruvate carboxyltransferase domain. The Mg(2+) site is built by Asp-49, His-253, His-255, and Asn-289. The segment at 456-575 (SGSGTPEWGR…IVSAVNRALR (120 aa)) is regulatory domain.

Belongs to the alpha-IPM synthase/homocitrate synthase family. LeuA type 2 subfamily. As to quaternary structure, homodimer. Mg(2+) is required as a cofactor.

Its subcellular location is the cytoplasm. The catalysed reaction is 3-methyl-2-oxobutanoate + acetyl-CoA + H2O = (2S)-2-isopropylmalate + CoA + H(+). Its pathway is amino-acid biosynthesis; L-leucine biosynthesis; L-leucine from 3-methyl-2-oxobutanoate: step 1/4. In terms of biological role, catalyzes the condensation of the acetyl group of acetyl-CoA with 3-methyl-2-oxobutanoate (2-ketoisovalerate) to form 3-carboxy-3-hydroxy-4-methylpentanoate (2-isopropylmalate). In Kineococcus radiotolerans (strain ATCC BAA-149 / DSM 14245 / SRS30216), this protein is 2-isopropylmalate synthase.